Reading from the N-terminus, the 158-residue chain is uncharacterized protein (158 aa).

A run of 4 helical transmembrane segments spans residues 12 to 32 (IITL…AVVV), 39 to 59 (LDIL…SLSV), 90 to 110 (LIYL…FNTI), and 113 to 133 (IIST…WLPL).

It is found in the cell membrane. This is an uncharacterized protein from Mycoplasma genitalium (strain ATCC 33530 / DSM 19775 / NCTC 10195 / G37) (Mycoplasmoides genitalium).